The sequence spans 321 residues: Taste receptor type 2 member 135 (321 aa).

Topologically, residues 1 to 28 (MGPIMSTGETSTAHTVLGCQITDKTVIT) are extracellular. Residues 29–49 (LFVILVFSCLVAVVGNGFIII) form a helical membrane-spanning segment. At 50 to 75 (ALGMKWLLRRTLSAHNKLLISLAASR) the chain is on the cytoplasmic side. The helical transmembrane segment at 76-96 (FCLQCVVIGKNIYVFLNPSSF) threads the bilayer. Topologically, residues 97-106 (PYNPVIQLLN) are extracellular. The chain crosses the membrane as a helical span at residues 107 to 127 (LMWDFLTAATIWFCSLLGFFY). Residues 128-149 (CVKIATLTHPVFVWLKYRLPGW) are Cytoplasmic-facing. A helical membrane pass occupies residues 150–170 (VPWMLLSAVGMSSLTSILCFI). Over 171–207 (GNHMIYQNYARRGHQPWNATGNSLRHSLEKFYFISIK) the chain is Extracellular. Residue N188 is glycosylated (N-linked (GlcNAc...) asparagine). A helical membrane pass occupies residues 208-228 (IIMWTVPTVIFSIFMSLLLVS). The Cytoplasmic segment spans residues 229–253 (LVRHMKKTLLALSELRDVWAQAHFK). The helical transmembrane segment at 254 to 274 (ALLPLLSFIILFISCFLTLVL) threads the bilayer. The Extracellular segment spans residues 275 to 286 (SSASSTPYQEFR). The chain crosses the membrane as a helical span at residues 287-307 (YWMWQVVIHLCTVIHPIVILL). At 308 to 321 (SNPVLRVVMKRGCC) the chain is on the cytoplasmic side.

The protein belongs to the G-protein coupled receptor T2R family.

The protein localises to the membrane. Putative taste receptor which may play a role in the perception of bitterness. The chain is Taste receptor type 2 member 135 from Rattus norvegicus (Rat).